Reading from the N-terminus, the 181-residue chain is Major urinary protein 11 (181 aa).

Positions 1–19 (MKMLLLLLCLGLTLVCVHA) are cleaved as a signal peptide. Residues Cys-83 and Cys-176 are joined by a disulfide bond.

The protein belongs to the calycin superfamily. Lipocalin family.

It localises to the secreted. Its function is as follows. Major urinary proteins (Mups) bind pheromones, and thus stabilize them to allow slow release into the air from urine marks. May protect pheromones from oxidation. May also act as pheromones themselves. In this context, they play a role in the regulation of social behaviors, such as aggression, mating, pup-suckling, territory establishment and dominance. Binds the pheromone analog 2-sec-butyl-4,5-dihydrothiazole (SBT) in vitro. In Mus musculus (Mouse), this protein is Major urinary protein 11.